The sequence spans 442 residues: Probable xylan O-acetyltransferase 8 (442 aa).

At 1-13 (MVQLPAMKRVKGR) the chain is on the cytoplasmic side. A helical; Signal-anchor for type II membrane protein membrane pass occupies residues 14 to 34 (APLSVVVAIIGGLALAGIIFT). Topologically, residues 35 to 442 (EDLRGLTEVK…TWNRLLYAHL (408 aa)) are lumenal. Asn96 carries N-linked (GlcNAc...) asparagine glycosylation. 4 disulfide bridges follow: Cys100–Cys151, Cys122–Cys187, Cys131–Cys426, and Cys344–Cys422. A GDS motif motif is present at residues 174–176 (GDS). The Nucleophile role is filled by Ser176. N-linked (GlcNAc...) asparagine glycans are attached at residues Asn217, Asn346, and Asn384. Asp421 (proton donor) is an active-site residue. Residues 421 to 424 (DCIH) carry the DXXH motif motif. The Proton acceptor role is filled by His424.

This sequence belongs to the PC-esterase family. TBL subfamily.

Its subcellular location is the golgi apparatus membrane. Probable xylan acetyltransferase required for 2-O- and 3-O-monoacetylation of xylosyl residues in xylan. Possesses extremely low activity in vitro. This chain is Probable xylan O-acetyltransferase 8, found in Oryza sativa subsp. japonica (Rice).